Here is a 208-residue protein sequence, read N- to C-terminus: Small ribosomal subunit protein uS4 (208 aa).

A disordered region spans residues 28 to 48; it reads YMERRPYGPGEHGRARKKQDS. Residues 95 to 160 enclose the S4 RNA-binding domain; the sequence is MRLDALVLRA…MPPFQVAAAG (66 aa).

This sequence belongs to the universal ribosomal protein uS4 family. Part of the 30S ribosomal subunit. Contacts protein S5. The interaction surface between S4 and S5 is involved in control of translational fidelity.

In terms of biological role, one of the primary rRNA binding proteins, it binds directly to 16S rRNA where it nucleates assembly of the body of the 30S subunit. With S5 and S12 plays an important role in translational accuracy. The polypeptide is Small ribosomal subunit protein uS4 (Arthrobacter sp. (strain FB24)).